Consider the following 410-residue polypeptide: TNF receptor-associated factor family protein DDB_G0279745 (410 aa).

Residues C27–R67 form an RING-type; degenerate zinc finger. TRAF-type zinc fingers lie at residues Y81–Q154 and Q154–I213. Residues L216–A284 are a coiled coil.

Belongs to the TNF receptor-associated factor family.

It localises to the cytoplasm. Functionally, probable adapter protein and signal transducer that links members of the tumor necrosis factor receptor family to different signaling pathways by association with the receptor cytoplasmic domain and kinases. The sequence is that of TNF receptor-associated factor family protein DDB_G0279745 from Dictyostelium discoideum (Social amoeba).